The sequence spans 788 residues: Protein FAR1-RELATED SEQUENCE 12 (788 aa).

The FAR1 1 domain maps to 57–133 (EFYNAYAART…QKEHNHELGG (77 aa)). The segment at 127-200 (HNHELGGEGS…GEVSDDHHQT (74 aa)) is disordered. Positions 142-151 (PRPSRAPAPT) are enriched in low complexity. Residues 165 to 175 (KVVDESDRETR) are compositionally biased toward basic and acidic residues. Residues 225-301 (QFYQAYAEVV…NKDHNHDLEP (77 aa)) form the FAR1 2 domain. The 97-residue stretch at 399–495 (SVVFDTSYRK…SAWQIREKER (97 aa)) folds into the MULE domain. An SWIM-type zinc finger spans residues 674-710 (HAVTFSASNLNSSCSCQMFEHEGLLCRHILKVFNLLD).

This sequence belongs to the FHY3/FAR1 family. In terms of tissue distribution, expressed in hypocotyls, rosette and cauline leaves, inflorescences stems, flowers and siliques.

It is found in the nucleus. Putative transcription activator involved in regulating light control of development. The sequence is that of Protein FAR1-RELATED SEQUENCE 12 (FRS12) from Arabidopsis thaliana (Mouse-ear cress).